Reading from the N-terminus, the 732-residue chain is Guanylate cyclase soluble subunit alpha-2 (732 aa).

The tract at residues 1–58 (MSRRKISSESFSSLGSDYLETSPEEEGECPLSRLCWNGSRSPPGPLEPSPAAAAAAAA) is disordered. The segment covering 49 to 58 (SPAAAAAAAA) has biased composition (low complexity). In terms of domain architecture, Guanylate cyclase spans 521-648 (TMLFSDIVGF…NNVTLASKFE (128 aa)).

Belongs to the adenylyl cyclase class-4/guanylyl cyclase family. In terms of assembly, heterodimer of an alpha and a beta chain. Isoform 1 is expressed in fetal brain, liver, colon, endothelium and testis. Isoform 2 is expressed only in liver, colon and endothelium.

It is found in the cytoplasm. The catalysed reaction is GTP = 3',5'-cyclic GMP + diphosphate. Activated by nitric oxide in the presence of magnesium or manganese ions. Its function is as follows. Has guanylyl cyclase on binding to the beta-1 subunit. In terms of biological role, isoform 2 acts as a negative regulator of guanylyl cyclase activity as it forms non-functional heterodimers with the beta subunits. The protein is Guanylate cyclase soluble subunit alpha-2 (GUCY1A2) of Homo sapiens (Human).